Here is a 304-residue protein sequence, read N- to C-terminus: tRNA-uridine aminocarboxypropyltransferase 1 (304 aa).

Disordered regions lie at residues 1–29 and 165–193; these read MALS…QTTS and RNKA…HEST. Over residues 180-193 the composition is skewed to basic and acidic residues; that stretch reads RTTDEEGWDLHEST. A DXTW motif is present at residues 206 to 209; it reads DSTW.

It belongs to the TDD superfamily. DTWD1 family.

It localises to the nucleus. It catalyses the reaction a uridine in tRNA + S-adenosyl-L-methionine = a 3-[(3S)-3-amino-3-carboxypropyl]uridine in tRNA + S-methyl-5'-thioadenosine + H(+). Its function is as follows. Catalyzes the formation of 3-(3-amino-3-carboxypropyl)uridine (acp3U) at position 20 in the D-loop of several cytoplasmic tRNAs (acp3U(20)). This is tRNA-uridine aminocarboxypropyltransferase 1 from Mus musculus (Mouse).